The following is a 286-amino-acid chain: uncharacterized protein (286 aa).

Residues Pro-8 to Ala-28 traverse the membrane as a helical segment.

It to M.jannaschii MJ1495.

It localises to the membrane. This is an uncharacterized protein from Methanocaldococcus jannaschii (strain ATCC 43067 / DSM 2661 / JAL-1 / JCM 10045 / NBRC 100440) (Methanococcus jannaschii).